The primary structure comprises 316 residues: Protein PXR1 (316 aa).

In terms of domain architecture, G-patch spans 25–71; it reads TSRFGHQYLERMGWKPGKGLGLVEHATTSHVKVSIKDDNLGLGSKLA. The interval 146-280 is disordered; sequence GTTKKRKIDS…DSMLMPKEQL (135 aa). Residues 179–195 show a composition bias toward basic and acidic residues; it reads DRKEKEEKKTEKENSEI. A compositionally biased stretch (basic residues) spans 196–209; that stretch reads KKKKKEKKEKKEKK. A compositionally biased stretch (basic and acidic residues) spans 210–240; it reads EKKDKNEKKEKKDKNEKKEKKDKNEEKEKKE. Over residues 241–260 the composition is skewed to basic residues; the sequence is KKEKKEKKDKKDKKDKKDKK. The segment covering 261–270 has biased composition (basic and acidic residues); the sequence is EKKEVKEVTR.

Belongs to the PINX1 family.

Its subcellular location is the nucleus. The protein localises to the nucleolus. In terms of biological role, involved in rRNA-processing at A0, A1 and A2 sites and negatively regulates telomerase. In Debaryomyces hansenii (strain ATCC 36239 / CBS 767 / BCRC 21394 / JCM 1990 / NBRC 0083 / IGC 2968) (Yeast), this protein is Protein PXR1 (PXR1).